Consider the following 370-residue polypeptide: Platelet-derived growth factor D (370 aa).

The signal sequence occupies residues 1–23 (MQRLVLVSILLCANFSCYPDTFA). Residues 52–170 (REENIQVTSN…PGFKIYYSFV (119 aa)) form the CUB domain. Residues Cys-109 and Cys-131 are joined by a disulfide bond. Asn-276 carries an N-linked (GlcNAc...) asparagine glycan. 2 cysteine pairs are disulfide-bonded: Cys-302–Cys-360 and Cys-306–Cys-362.

It belongs to the PDGF/VEGF growth factor family. Homodimer; disulfide-linked. Interacts with PDGFRB homodimers, and with heterodimers formed by PDGFRA and PDGFRB. Activated by proteolytic cleavage. Proteolytic removal of the N-terminal CUB domain releasing the core domain is necessary for unmasking the receptor-binding epitopes of the core domain. Cleavage after Arg-247 or Arg-249 by urokinase plasminogen activator gives rise to the active form. As to expression, expressed at high levels in developing heart, lung, kidney and some muscle derivatives. Moderately expressed in liver, brain and testis. In the kidney, localized to glomerular mesangial cells and vascular smooth muscle cells. Up-regulated in areas of renal fibrosis. In mice with unilateral ureteral obstruction, expressed in interstitial cells at day 4, with an increased to maximal expression at day 14.

It is found in the secreted. Functionally, growth factor that plays an essential role in the regulation of embryonic development, cell proliferation, cell migration, survival and chemotaxis. Potent mitogen for cells of mesenchymal origin. Plays an important role in wound healing. Has oncogenic potential and can induce tumor formation. Induces macrophage recruitment, increased interstitial pressure, and blood vessel maturation during angiogenesis. Can initiate events that lead to a mesangial proliferative glomerulonephritis, including influx of monocytes and macrophages and production of extracellular matrix. The sequence is that of Platelet-derived growth factor D (Pdgfd) from Mus musculus (Mouse).